A 386-amino-acid polypeptide reads, in one-letter code: Succinate--CoA ligase [ADP-forming] subunit beta (386 aa).

The ATP-grasp domain maps to 9 to 244 (KELLRKYGVV…FDEEDADEIE (236 aa)). Residues Lys-46, 53–55 (GRG), Glu-99, Ala-102, and Glu-107 each bind ATP. 2 residues coordinate Mg(2+): Asn-199 and Asp-213. Residues Asn-264 and 321 to 323 (GIM) each bind substrate.

The protein belongs to the succinate/malate CoA ligase beta subunit family. Heterotetramer of two alpha and two beta subunits. Mg(2+) is required as a cofactor.

It carries out the reaction succinate + ATP + CoA = succinyl-CoA + ADP + phosphate. It catalyses the reaction GTP + succinate + CoA = succinyl-CoA + GDP + phosphate. It functions in the pathway carbohydrate metabolism; tricarboxylic acid cycle; succinate from succinyl-CoA (ligase route): step 1/1. In terms of biological role, succinyl-CoA synthetase functions in the citric acid cycle (TCA), coupling the hydrolysis of succinyl-CoA to the synthesis of either ATP or GTP and thus represents the only step of substrate-level phosphorylation in the TCA. The beta subunit provides nucleotide specificity of the enzyme and binds the substrate succinate, while the binding sites for coenzyme A and phosphate are found in the alpha subunit. This chain is Succinate--CoA ligase [ADP-forming] subunit beta, found in Aromatoleum aromaticum (strain DSM 19018 / LMG 30748 / EbN1) (Azoarcus sp. (strain EbN1)).